A 426-amino-acid polypeptide reads, in one-letter code: NADH-quinone oxidoreductase subunit H 1 (426 aa).

The next 10 membrane-spanning stretches (helical) occupy residues 22–42 (LWAT…VMLM), 91–111 (FLFW…YLVI), 124–144 (IGVL…VMAG), 163–183 (MVSY…MTSL), 206–226 (FIFK…IAMV), 258–278 (LFFL…VTLW), 299–319 (FSVF…IGWV), 331–351 (AIGL…LLIP), 357–377 (VSDI…YIWY), and 392–412 (IGWK…AVLG).

It belongs to the complex I subunit 1 family. In terms of assembly, NDH-1 is composed of 14 different subunits. Subunits NuoA, H, J, K, L, M, N constitute the membrane sector of the complex.

It is found in the cell inner membrane. The enzyme catalyses a quinone + NADH + 5 H(+)(in) = a quinol + NAD(+) + 4 H(+)(out). In terms of biological role, NDH-1 shuttles electrons from NADH, via FMN and iron-sulfur (Fe-S) centers, to quinones in the respiratory chain. The immediate electron acceptor for the enzyme in this species is believed to be ubiquinone. Couples the redox reaction to proton translocation (for every two electrons transferred, four hydrogen ions are translocated across the cytoplasmic membrane), and thus conserves the redox energy in a proton gradient. This subunit may bind ubiquinone. The polypeptide is NADH-quinone oxidoreductase subunit H 1 (Koribacter versatilis (strain Ellin345)).